The following is a 210-amino-acid chain: MPPKNKEKGKKSGAQKKKKNWGADVVAESRHRLVVLEKELLRDHLALRRDEARRAKASEDQLRQRLQGVEAELEGARSEGKAIYAEMSRQCHALQEDMQTRSKQLEEEVKGLRGQLEACQREAAAAREEAEQALGERDQALAQLRAHMADMEAKYEEILHDSLDRLLAKLRAIKQQWDGAALRLHARHKEQQRQFGLTPPGSLRPPAPSL.

The segment at 1-23 (MPPKNKEKGKKSGAQKKKKNWGA) is disordered. Basic residues predominate over residues 7-20 (EKGKKSGAQKKKKN). Positions 49 to 161 (RDEARRAKAS…EAKYEEILHD (113 aa)) form a coiled coil. The interval 188–210 (HKEQQRQFGLTPPGSLRPPAPSL) is disordered.

Belongs to the DRC12 family. As to quaternary structure, component of the nexin-dynein regulatory complex (N-DRC).

Its subcellular location is the cytoplasm. The protein resides in the cytoskeleton. The protein localises to the flagellum axoneme. Its function is as follows. Component of the nexin-dynein regulatory complex (N-DRC), a key regulator of ciliary/flagellar motility which maintains the alignment and integrity of the distal axoneme and regulates microtubule sliding in motile axonemes. This is Dynein regulatory complex protein 12 from Homo sapiens (Human).